Consider the following 33-residue polypeptide: MNLELIGQLVTVALVVGAGPIIIGALFARGGNL.

The helical transmembrane segment at 5-25 (LIGQLVTVALVVGAGPIIIGA) threads the bilayer.

It belongs to the Psb30/Ycf12 family. In terms of assembly, PSII is composed of 1 copy each of membrane proteins PsbA, PsbB, PsbC, PsbD, PsbE, PsbF, PsbH, PsbI, PsbJ, PsbK, PsbL, PsbM, PsbT, PsbX, PsbY, PsbZ, Psb30/Ycf12, peripheral proteins of the oxygen-evolving complex and a large number of cofactors. It forms dimeric complexes.

The protein resides in the plastid. It is found in the chloroplast thylakoid membrane. Functionally, a core subunit of photosystem II (PSII), probably helps stabilize the reaction center. This is Photosystem II reaction center protein Psb30 from Ostreococcus tauri.